The primary structure comprises 117 residues: Large ribosomal subunit protein bL20 (117 aa).

This sequence belongs to the bacterial ribosomal protein bL20 family.

Functionally, binds directly to 23S ribosomal RNA and is necessary for the in vitro assembly process of the 50S ribosomal subunit. It is not involved in the protein synthesizing functions of that subunit. This is Large ribosomal subunit protein bL20 from Limosilactobacillus reuteri (strain DSM 20016) (Lactobacillus reuteri).